Consider the following 1526-residue polypeptide: uncharacterized protein (1526 aa).

WD repeat units lie at residues 334–376 (CTKE…EHIS), 862–901 (KILG…ELLT), 904–945 (GHNS…KTFK), 946–985 (GHTS…CLYI), 988–1027 (GHTG…CFYI), 1030–1069 (GHTS…CLYT), 1072–1111 (GHTS…CLYT), 1114–1153 (GYTS…CLYT), 1156–1195 (GHTN…CLYI), 1198–1237 (GHTS…CLCT), 1240–1279 (GHTS…CLHT), 1282–1321 (GHTN…CLHT), 1324–1363 (GHTS…CLYT), 1366–1405 (GHTN…CLYT), 1408–1447 (GHNN…CLYT), and 1450–1491 (GHIN…KTLK). In terms of domain architecture, Pentapeptide repeat spans 823 to 862 (MVLEGRDLSHTVIIGADFTNTSLRCVNFTEANLAYSVFTK).

This is an uncharacterized protein from Nostoc sp. (strain PCC 7120 / SAG 25.82 / UTEX 2576).